Consider the following 314-residue polypeptide: Olfactory receptor 2W3 (314 aa).

The Extracellular segment spans residues 1-25 (MDGTNGSTQTHFILLGFSDRPHLER). Asparagine 5 is a glycosylation site (N-linked (GlcNAc...) asparagine). The chain crosses the membrane as a helical span at residues 26–49 (ILFVVILIAYLLTLVGNTTIILVS). The Cytoplasmic segment spans residues 50 to 57 (RLDPHLHT). Residues 58–79 (PMYFFLAHLSFLDLSFTTSSIP) traverse the membrane as a helical segment. Residues 80–100 (QLLYNLNGCDKTISYMGCAIQ) are Extracellular-facing. The chain crosses the membrane as a helical span at residues 101-120 (LFLFLGLGGVECLLLAVMAY). At 121-139 (DRCVAICKPLHYMVIMNPR) the chain is on the cytoplasmic side. A helical membrane pass occupies residues 140 to 158 (LCRGLVSVTWGCGVANSLA). Topologically, residues 159–195 (MSPVTLRLPRCGHHEVDHFLREMPALIRMACVSTVAI) are extracellular. Residues 196–219 (EGTVFVLAVGVVLSPLVFILLSYS) form a helical membrane-spanning segment. Residues 220–236 (YIVRAVLQIRSASGRQK) are Cytoplasmic-facing. A helical membrane pass occupies residues 237–259 (AFGTCGSHLTVVSLFYGNIIYMY). Over 260–272 (MQPGASSSQDQGM) the chain is Extracellular. A helical transmembrane segment spans residues 273–292 (FLMLFYNIVTPLLNPLIYTL). Over 293-314 (RNREVKGALGRLLLGKRELGKE) the chain is Cytoplasmic.

Belongs to the G-protein coupled receptor 1 family.

The protein localises to the cell membrane. Odorant receptor. This Homo sapiens (Human) protein is Olfactory receptor 2W3 (OR2W3).